The sequence spans 340 residues: Cytoskeleton protein RodZ (340 aa).

Residues 1–111 (MNTEATQEKS…LGKQRKKRDG (111 aa)) lie on the Cytoplasmic side of the membrane. Residues 19-79 (LRTAREQMGL…RLVHVPEEEL (61 aa)) form the HTH cro/C1-type domain. The segment at residues 30-49 (QQNVAERLCLKLSTIRDIEE) is a DNA-binding region (H-T-H motif). The chain crosses the membrane as a helical; Signal-anchor for type II membrane protein span at residues 112 to 132 (WLMIFTWLVLFVVLGLTGAWW). Topologically, residues 133 to 340 (WQNHKAAQDD…QVARLTVGAP (208 aa)) are periplasmic. Residues 162 to 252 (ALSDDNANGG…AAPLPTGSAA (91 aa)) are disordered. Residues 183–201 (ATANNAPSSVTATSDNGTP) are compositionally biased toward polar residues. Low complexity predominate over residues 202–233 (AATAQSSQVTASNAAPAANAVNDNTPPVAVAP).

The protein belongs to the RodZ family.

Its subcellular location is the cell inner membrane. Its function is as follows. Cytoskeletal protein that is involved in cell-shape control through regulation of the length of the long axis. This Erwinia tasmaniensis (strain DSM 17950 / CFBP 7177 / CIP 109463 / NCPPB 4357 / Et1/99) protein is Cytoskeleton protein RodZ.